The chain runs to 139 residues: CLAVATA3/ESR (CLE)-related protein 1 (139 aa).

Residues 1–22 (MPNIFKILLIVLLAVVSFRLSA) form the signal peptide. Residues 23–90 (STGDKKTAND…VPSHLTNRSM (68 aa)) are required for secretion from the host cytoplasm to the host apoplasm. Residues N37 and N87 are each glycosylated (N-linked (GlcNAc...) asparagine). Residues 66–139 (AIGRSNAQGG…SPSGPDPHHH (74 aa)) are disordered. Residues 100 to 125 (EKGAATRVEKMRAQLRELAEKMTDKD) are a coiled coil. Over residues 106 to 128 (RVEKMRAQLRELAEKMTDKDPKR) the composition is skewed to basic and acidic residues. A CLE motif is present at residues 128 to 139 (RLSPSGPDPHHH).

Belongs to the CLV3/ESR signal peptide family. Highly expressed exclusively within the dorsal esophageal gland cell during syncytium formation in host plants (at protein level).

It localises to the secreted. The protein resides in the host cytoplasm. The protein localises to the host extracellular space. It is found in the extracellular space. Its subcellular location is the apoplast. In terms of biological role, mimics host plant CLE extracellular signal peptides that regulate cell fate. May play a role in the differentiation or division of feeding cells (syncytia) induced in plant roots during infection. This chain is CLAVATA3/ESR (CLE)-related protein 1 (CLE1), found in Heterodera glycines (Soybean cyst nematode worm).